A 369-amino-acid chain; its full sequence is DNA replication and repair protein RecF (369 aa).

30–37 (GINAQGKT) provides a ligand contact to ATP.

The protein belongs to the RecF family.

It is found in the cytoplasm. In terms of biological role, the RecF protein is involved in DNA metabolism; it is required for DNA replication and normal SOS inducibility. RecF binds preferentially to single-stranded, linear DNA. It also seems to bind ATP. The sequence is that of DNA replication and repair protein RecF from Macrococcus caseolyticus (strain JCSC5402) (Macrococcoides caseolyticum).